The chain runs to 383 residues: Hydroxymethylglutaryl-CoA synthase (383 aa).

Asp-29 contacts (3S)-3-hydroxy-3-methylglutaryl-CoA. The active-site Proton donor/acceptor is Glu-79. 7 residues coordinate (3S)-3-hydroxy-3-methylglutaryl-CoA: Cys-111, Thr-152, Ser-201, His-233, Lys-242, Asn-275, and Ser-308. Residue Cys-111 is the Acyl-thioester intermediate of the active site. His-233 serves as the catalytic Proton donor/acceptor.

The protein belongs to the thiolase-like superfamily. HMG-CoA synthase family. Homodimer.

It carries out the reaction acetoacetyl-CoA + acetyl-CoA + H2O = (3S)-3-hydroxy-3-methylglutaryl-CoA + CoA + H(+). It functions in the pathway metabolic intermediate biosynthesis; (R)-mevalonate biosynthesis; (R)-mevalonate from acetyl-CoA: step 2/3. Is sensitive to feedback substrate inhibition by acetoacetyl-CoA. Is inactivated by hymeglusin, which also blocks the growth of E.faecalis, indicating the critical role that the mevalonate pathway plays in isoprenoid biosynthesis. Catalyzes the condensation of acetyl-CoA with acetoacetyl-CoA to form 3-hydroxy-3-methylglutaryl-CoA (HMG-CoA). Functions in the mevalonate (MVA) pathway leading to isopentenyl diphosphate (IPP), a key precursor for the biosynthesis of isoprenoid compounds. In Enterococcus faecalis (Streptococcus faecalis), this protein is Hydroxymethylglutaryl-CoA synthase (mvaS).